Consider the following 1145-residue polypeptide: Cellulose synthase-like protein D3 (1145 aa).

Over residues 1-19 (MASNNHFMNSRSNLSTNSD) the composition is skewed to polar residues. Disordered stretches follow at residues 1–38 (MASNNHFMNSRSNLSTNSDAAEAERHQQPVSNSVTFAR) and 189–208 (DNNKQQRPMLPPPAGGSKMD). Transmembrane regions (helical) follow at residues 289–309 (VISPYRLLILIRIVVLALFLM) and 319–339 (AIWLWGMSVVCELWFALSWLL). Residue aspartate 419 is part of the active site. Serine 755 is subject to Phosphoserine. Residue aspartate 848 is part of the active site. A run of 6 helical transmembrane segments spans residues 930 to 950 (FFLIVYCFLPALSLFSGQFIV), 956 to 976 (TFLVYLLIISITLCLLALLEI), 1002 to 1022 (LAAVIQGLLKVVAGIEISFTL), 1045 to 1065 (SLMIPPITIMMVNLIAIAVGF), 1079 to 1099 (LIGGVFFSFWVLAHLYPFAKG), and 1109 to 1129 (TIVYVWSGLVAITISLLWVAI).

Belongs to the glycosyltransferase 2 family. Plant cellulose synthase-like D subfamily. Preferentially expressed in root hair cells. Expressed in roots, leaves, stems, flowers and siliques.

It is found in the golgi apparatus membrane. Thought to be a Golgi-localized beta-glycan synthase that polymerize the backbones of noncellulosic polysaccharides (hemicelluloses) of plant cell wall. Required for synthesis of a cell wall polysaccharide essential for root hair elongation, but not initiation. May be the functional ortholog of rice CSLD1. This Arabidopsis thaliana (Mouse-ear cress) protein is Cellulose synthase-like protein D3 (CSLD3).